Reading from the N-terminus, the 692-residue chain is Follicle-stimulating hormone receptor (692 aa).

Positions 1–17 (MALLLVSLLAFLGTGSG) are cleaved as a signal peptide. 2 disulfide bridges follow: Cys-18–Cys-25 and Cys-23–Cys-32. Positions 18-46 (CHHWLCHCSNRVFLCQDSKVTEIPTDLPR) constitute an LRRNT domain. The Extracellular segment spans residues 18–365 (CHHWLCHCSN…EDIMGYNILR (348 aa)). 9 LRR repeats span residues 49-72 (IELR…FGDL), 73-97 (EKIE…LPKL), 98-118 (HEIR…AFQN), 119-143 (LPSL…KIQS), 144-169 (LQKV…MGLS), 170-192 (FESV…AFNG), 193-216 (TQLD…VFQG), 217-240 (ASGP…GLEN), and 241-259 (LKKL…PNLD). N-linked (GlcNAc...) asparagine glycosylation is found at Asn-191 and Asn-199. Intrachain disulfides connect Cys-275/Cys-345, Cys-276/Cys-292, Cys-276/Cys-355, and Cys-292/Cys-337. Residue Asn-293 is glycosylated (N-linked (GlcNAc...) asparagine). Tyr-334 carries the post-translational modification Sulfotyrosine. Residues 366–386 (VLIWFISILAITGNTTVLVVL) traverse the membrane as a helical segment. Residues 387 to 397 (TTSQYKLTVPR) lie on the Cytoplasmic side of the membrane. Residues 398-420 (FLMCNLAFADLCIGIYLLLIASV) traverse the membrane as a helical segment. The Extracellular portion of the chain corresponds to 421–442 (DIHTKSQYHNYAIDWQTGAGCD). The cysteines at positions 441 and 516 are disulfide-linked. The helical transmembrane segment at 443–464 (AAGFFTVFASELSVYTLTAITL) threads the bilayer. The Cytoplasmic portion of the chain corresponds to 465 to 484 (ERWHTITHAMQLECKVQLRH). The helical transmembrane segment at 485–507 (AASVMVLGWTFAFAAALFPIFGI) threads the bilayer. Residues 508-527 (SSYMKVSICLPMDIDSPLSQ) lie on the Extracellular side of the membrane. Residues 528-549 (LYVMALLVLNVLAFVVICGCYT) traverse the membrane as a helical segment. At 550-572 (HIYLTVRNPTIVSSSSDTKIAKR) the chain is on the cytoplasmic side. Residues 573–596 (MATLIFTDFLCMAPISFFAISASL) traverse the membrane as a helical segment. Over 597 to 607 (KVPLITVSKAK) the chain is Extracellular. A helical membrane pass occupies residues 608–629 (ILLVLFYPINSCANPFLYAIFT). Over 630–692 (KNFRRDFFIL…LVPLNHSSQN (63 aa)) the chain is Cytoplasmic.

This sequence belongs to the G-protein coupled receptor 1 family. FSH/LSH/TSH subfamily. In terms of assembly, homotrimer. Functions as a homotrimer binding the FSH hormone heterodimer composed of CGA and FSHB. Interacts with ARRB2. Interacts with APPL2; interaction is independent of follicle stimulating hormone stimulation. Post-translationally, N-glycosylated; indirectly required for FSH-binding, possibly via a conformational change that allows high affinity binding of hormone. In terms of processing, sulfated. As to expression, sertoli cells and ovarian granulosa cells.

It localises to the cell membrane. Its function is as follows. G protein-coupled receptor for follitropin, the follicle-stimulating hormone. Through cAMP production activates the downstream PI3K-AKT and ERK1/ERK2 signaling pathways. This chain is Follicle-stimulating hormone receptor (Fshr), found in Rattus norvegicus (Rat).